We begin with the raw amino-acid sequence, 86 residues long: YcgL domain-containing protein XC_4086 (86 aa).

The 83-residue stretch at 1 to 83 (MHAYVYKSQR…PKTVVLAGEC (83 aa)) folds into the YcgL domain.

This is YcgL domain-containing protein XC_4086 from Xanthomonas campestris pv. campestris (strain 8004).